We begin with the raw amino-acid sequence, 315 residues long: Tyrosine recombinase XerC (315 aa).

The 103-residue stretch at 1-103 folds into the Core-binding (CB) domain; it reads MITSFYAFLD…AIKSFARFCV (103 aa). Residues 124 to 306 form the Tyr recombinase domain; that stretch reads ELPSPLTYEQ…SMKLKKQIHD (183 aa). Active-site residues include Arg164, Lys188, His258, Arg261, and His284. Tyr293 functions as the O-(3'-phospho-DNA)-tyrosine intermediate in the catalytic mechanism.

Belongs to the 'phage' integrase family. XerC subfamily. Forms a cyclic heterotetrameric complex composed of two molecules of XerC and two molecules of XerD.

The protein resides in the cytoplasm. Its function is as follows. Site-specific tyrosine recombinase, which acts by catalyzing the cutting and rejoining of the recombining DNA molecules. The XerC-XerD complex is essential to convert dimers of the bacterial chromosome into monomers to permit their segregation at cell division. It also contributes to the segregational stability of plasmids. The protein is Tyrosine recombinase XerC of Chlamydia trachomatis serovar L2b (strain UCH-1/proctitis).